Reading from the N-terminus, the 212-residue chain is Pyridoxine/pyridoxamine 5'-phosphate oxidase (212 aa).

Residues 59–64 (RMVLMK), 74–75 (YS), Lys-81, and Gln-103 each bind FMN. Lys-64 serves as a coordination point for substrate. Substrate-binding residues include Tyr-121 and Arg-125. FMN is bound by residues 138-139 (QS) and Trp-183. 189–191 (RLH) provides a ligand contact to substrate. Arg-193 serves as a coordination point for FMN.

Belongs to the pyridoxamine 5'-phosphate oxidase family. As to quaternary structure, homodimer. FMN is required as a cofactor.

The catalysed reaction is pyridoxamine 5'-phosphate + O2 + H2O = pyridoxal 5'-phosphate + H2O2 + NH4(+). The enzyme catalyses pyridoxine 5'-phosphate + O2 = pyridoxal 5'-phosphate + H2O2. The protein operates within cofactor metabolism; pyridoxal 5'-phosphate salvage; pyridoxal 5'-phosphate from pyridoxamine 5'-phosphate: step 1/1. Its pathway is cofactor metabolism; pyridoxal 5'-phosphate salvage; pyridoxal 5'-phosphate from pyridoxine 5'-phosphate: step 1/1. Functionally, catalyzes the oxidation of either pyridoxine 5'-phosphate (PNP) or pyridoxamine 5'-phosphate (PMP) into pyridoxal 5'-phosphate (PLP). The chain is Pyridoxine/pyridoxamine 5'-phosphate oxidase from Rhodopseudomonas palustris (strain HaA2).